The sequence spans 294 residues: dTDP-4-dehydrorhamnose reductase (294 aa).

NADH-binding positions include 11–13, 38–39, and 62–64; these read GQL, DI, and AYT. Residues 12–13, 38–39, and 62–64 contribute to the NADPH site; these read QL, DI, and AYT. Residue 103 to 104 coordinates dTDP-beta-L-rhamnose; the sequence is TD. NADH is bound by residues Tyr127 and Lys131. NADPH contacts are provided by Tyr127 and Lys131. The active-site Proton donor/acceptor is the Tyr127. A dTDP-beta-L-rhamnose-binding site is contributed by Trp152.

It belongs to the dTDP-4-dehydrorhamnose reductase family. As to quaternary structure, homodimer. The cofactor is Mg(2+).

It carries out the reaction dTDP-beta-L-rhamnose + NADP(+) = dTDP-4-dehydro-beta-L-rhamnose + NADPH + H(+). The protein operates within carbohydrate biosynthesis; dTDP-L-rhamnose biosynthesis. Its pathway is bacterial outer membrane biogenesis; LPS O-antigen biosynthesis. Involved in the biosynthesis of the dTDP-L-rhamnose which is an important component of lipopolysaccharide (LPS). Catalyzes the reduction of dTDP-6-deoxy-L-lyxo-4-hexulose to yield dTDP-L-rhamnose. The protein is dTDP-4-dehydrorhamnose reductase of Aggregatibacter actinomycetemcomitans (Actinobacillus actinomycetemcomitans).